The primary structure comprises 481 residues: Probable glycine dehydrogenase (decarboxylating) subunit 2 (481 aa).

The disordered stretch occupies residues 1-23 (MVIFEKTRGKNSPSVMPSKKGDV). An N6-(pyridoxal phosphate)lysine modification is found at Lys-263.

Belongs to the GcvP family. C-terminal subunit subfamily. In terms of assembly, the glycine cleavage system is composed of four proteins: P, T, L and H. In this organism, the P 'protein' is a heterodimer of two subunits. The cofactor is pyridoxal 5'-phosphate.

It catalyses the reaction N(6)-[(R)-lipoyl]-L-lysyl-[glycine-cleavage complex H protein] + glycine + H(+) = N(6)-[(R)-S(8)-aminomethyldihydrolipoyl]-L-lysyl-[glycine-cleavage complex H protein] + CO2. Its function is as follows. The glycine cleavage system catalyzes the degradation of glycine. The P protein binds the alpha-amino group of glycine through its pyridoxal phosphate cofactor; CO(2) is released and the remaining methylamine moiety is then transferred to the lipoamide cofactor of the H protein. The protein is Probable glycine dehydrogenase (decarboxylating) subunit 2 of Francisella philomiragia subsp. philomiragia (strain ATCC 25017 / CCUG 19701 / FSC 153 / O#319-036).